The following is a 190-amino-acid chain: NADH-quinone oxidoreductase subunit B (190 aa).

Residues C69, C70, C134, and C164 each coordinate [4Fe-4S] cluster.

Belongs to the complex I 20 kDa subunit family. As to quaternary structure, NDH-1 is composed of 14 different subunits. Subunits NuoB, C, D, E, F, and G constitute the peripheral sector of the complex. The cofactor is [4Fe-4S] cluster.

Its subcellular location is the cell inner membrane. It carries out the reaction a quinone + NADH + 5 H(+)(in) = a quinol + NAD(+) + 4 H(+)(out). Functionally, NDH-1 shuttles electrons from NADH, via FMN and iron-sulfur (Fe-S) centers, to quinones in the respiratory chain. Couples the redox reaction to proton translocation (for every two electrons transferred, four hydrogen ions are translocated across the cytoplasmic membrane), and thus conserves the redox energy in a proton gradient. This Hyphomonas neptunium (strain ATCC 15444) protein is NADH-quinone oxidoreductase subunit B.